Consider the following 383-residue polypeptide: Micronemal protein 3 (383 aa).

A signal peptide spans 1–26; the sequence is MRGGTSALLHALTFSGAVWMCTPAEA. A propeptide spans 27-66 (required for proper sorting to micronemes); it reads LPIQKSVQLGSFDKVVPSREVVSESLAPSFAVTETHSSVQ. Positions 67 to 145 are lectin-like; required for the binding of host cells; the sequence is SPSKQETQLC…HPDKSYGGDC (79 aa). Required for proper sorting to micronemes regions lie at residues 146-189, 190-236, and 237-290; these read SCEK…SEDP, CSKR…KRTG, and CHAF…LAEK. One can recognise an EGF-like domain in the interval 186–227; that stretch reads SEDPCSKRGNAKCGPNGTCIVVDSVSYTCTCGDGETLVNLPE. Intrachain disulfides connect Cys190-Cys204 and Cys198-Cys214. Residue Asn201 is glycosylated (N-linked (GlcNAc...) asparagine). Residues 294–359 are involved in dimerization; that stretch reads EFGISASSCK…HTVTCEKIKH (66 aa).

In terms of assembly, homodimer; dimerization is likely required for host cell binding but not for trafficking to micronemes. Post-translationally, removal of the propeptide occurs in a post-medial-Golgi compartment. Removal of the propeptide is required for the host cell binding. The presence of propeptide does not affect dimerization. The presence of propeptide does not affect sorting to micronemes.

It localises to the cytoplasmic vesicle. Its subcellular location is the secretory vesicle. The protein resides in the microneme. The protein localises to the secreted. It is found in the golgi apparatus. It localises to the endoplasmic reticulum. Functionally, adhesin; can bind both the host cells and the parasites. May be involved in parasite invasion by acting as a bridge between the parasite and the host cell. Triggers innate immune responses in mouse macrophages via the TLR11/MyD88/NF-kappa-B pathway. Induces TNF/TNF-alpha secretion in mouse macrophages. Induces secretion of IL6 in mouse and human macrophages likely via different mechanisms. Up-regulates expression of NOS2/iNOS in mouse macrophages. Induces mouse macrophage polarization. The chain is Micronemal protein 3 from Toxoplasma gondii.